We begin with the raw amino-acid sequence, 498 residues long: Glycerol kinase (498 aa).

Residue threonine 12 participates in ADP binding. Residues threonine 12, threonine 13, and serine 14 each contribute to the ATP site. Position 12 (threonine 12) interacts with sn-glycerol 3-phosphate. Arginine 16 lines the ADP pocket. Positions 82, 83, 134, and 244 each coordinate sn-glycerol 3-phosphate. Glycerol contacts are provided by arginine 82, glutamate 83, tyrosine 134, aspartate 244, and glutamine 245. Threonine 266 and glycine 309 together coordinate ADP. ATP is bound by residues threonine 266, glycine 309, glutamine 313, and glycine 410. Positions 410 and 414 each coordinate ADP.

The protein belongs to the FGGY kinase family. As to quaternary structure, homotetramer and homodimer (in equilibrium).

It catalyses the reaction glycerol + ATP = sn-glycerol 3-phosphate + ADP + H(+). The protein operates within polyol metabolism; glycerol degradation via glycerol kinase pathway; sn-glycerol 3-phosphate from glycerol: step 1/1. Activated by phosphorylation and inhibited by fructose 1,6-bisphosphate (FBP). Its function is as follows. Key enzyme in the regulation of glycerol uptake and metabolism. Catalyzes the phosphorylation of glycerol to yield sn-glycerol 3-phosphate. This chain is Glycerol kinase, found in Natranaerobius thermophilus (strain ATCC BAA-1301 / DSM 18059 / JW/NM-WN-LF).